A 240-amino-acid polypeptide reads, in one-letter code: Putative exosome complex component RRP41 (240 aa).

It belongs to the RNase PH family. As to quaternary structure, component of the RNA exosome complex.

The protein resides in the cytoplasm. Its subcellular location is the nucleus. It localises to the nucleolus. The protein localises to the nucleoplasm. Functionally, non-catalytic component of the RNA exosome complex which has 3'-&gt;5' exoribonuclease activity and participates in a multitude of cellular RNA processing and degradation events. The sequence is that of Putative exosome complex component RRP41 (exos-4.1) from Caenorhabditis elegans.